We begin with the raw amino-acid sequence, 899 residues long: Suppressor of glycerol defect protein 1 (899 aa).

Basic and acidic residues predominate over residues 24 to 33; that stretch reads QDERFSISEG. Disordered stretches follow at residues 24–181 and 248–326; these read QDER…VSYP and ETNS…DDSE. The segment covering 34–49 has biased composition (basic residues); it reads KKRRRGNGKHLSRKEK. The span at 65-77 shows a compositional bias: polar residues; the sequence is REINSSRLKSAPT. The span at 103–126 shows a compositional bias: acidic residues; it reads DESESNENWDSDEVLTDEVAEESG. Composition is skewed to basic and acidic residues over residues 134-143, 162-174, and 251-264; these read ETMKKLESLK, SYEKKHIRNRDTN, and SMRKDDEASEKAFS. Acidic residues predominate over residues 265–292; sequence SDDDLSASDFEDSDGLSESDNDSVADSD. The 206-residue stretch at 335-540 folds into the MIF4G domain; the sequence is SKKVNSSLNK…DTMSDLKNNR (206 aa). Residues 644–781 form the MI domain; sequence DIRRAIFISI…KLDVFKHVPF (138 aa). Ser736 carries the phosphoserine modification.

This sequence belongs to the CWC22 family. In terms of assembly, interacts with PLC1.

The protein resides in the nucleus. It is found in the nucleolus. Involved in osmoregulatory glycerol response, probably through its interaction with PLC1 which regulates the expression of GDP1. The polypeptide is Suppressor of glycerol defect protein 1 (SGD1) (Saccharomyces cerevisiae (strain ATCC 204508 / S288c) (Baker's yeast)).